A 1360-amino-acid chain; its full sequence is Probable inactive protein kinase DDB_G0270444 (1360 aa).

WD repeat units lie at residues 44–83 (SSKRPITFVIYDEEGNQFITGEDDFFIRLYNEDGTYIKQL), 109–152 (IRNI…AVYN), 166–205 (TTSAGITALTFDPTNLLVISGTSDGIVRKHSLRERVIMGT), and 208–247 (GHSRGAILNLLLTKHGHLLSSSMDRTIRLWDIDSGKQITG). A Protein kinase domain is found at 636–954 (EKSIQTYLSN…IEQALSHPFI (319 aa)). The span at 959–979 (KQQQQQQQQKQQQQQQQQQQQ) shows a compositional bias: low complexity. 3 disordered regions span residues 959 to 989 (KQQQQQQQQKQQQQQQQQQQQEIIPKDDSLT), 1258 to 1311 (IISE…VEEE), and 1331 to 1360 (EVEEEIEVEEEIEVEEEIQVEDDTDKSNDF). 2 coiled-coil regions span residues 1014 to 1269 (SKIK…QEGE) and 1297 to 1352 (NASD…QVED). The span at 1291 to 1300 (LERDNKNASD) shows a compositional bias: basic and acidic residues. Acidic residues-rich tracts occupy residues 1301 to 1311 (HDDEQQFVEEE) and 1331 to 1354 (EVEEEIEVEEEIEVEEEIQVEDDT).

This sequence belongs to the protein kinase superfamily. CMGC Ser/Thr protein kinase family.

This is Probable inactive protein kinase DDB_G0270444 from Dictyostelium discoideum (Social amoeba).